A 445-amino-acid chain; its full sequence is Trigger factor (445 aa).

In terms of domain architecture, PPIase FKBP-type spans 162–247; that stretch reads GDQVTIDAIG…IKAVHTAEPT (86 aa).

Belongs to the FKBP-type PPIase family. Tig subfamily.

The protein localises to the cytoplasm. It catalyses the reaction [protein]-peptidylproline (omega=180) = [protein]-peptidylproline (omega=0). Functionally, involved in protein export. Acts as a chaperone by maintaining the newly synthesized protein in an open conformation. Functions as a peptidyl-prolyl cis-trans isomerase. The sequence is that of Trigger factor from Rickettsia massiliae (strain Mtu5).